We begin with the raw amino-acid sequence, 590 residues long: Arginine--tRNA ligase (590 aa).

The 'HIGH' region signature appears at A138 to H148.

The protein belongs to the class-I aminoacyl-tRNA synthetase family. In terms of assembly, monomer.

Its subcellular location is the cytoplasm. It catalyses the reaction tRNA(Arg) + L-arginine + ATP = L-arginyl-tRNA(Arg) + AMP + diphosphate. This is Arginine--tRNA ligase from Orientia tsutsugamushi (strain Boryong) (Rickettsia tsutsugamushi).